We begin with the raw amino-acid sequence, 124 residues long: Heat-labile enterotoxin B chain (124 aa).

The N-terminal stretch at 1–21 (MNKVKCYVLFTALLSSLCAYG) is a signal peptide. The cysteines at positions 30 and 107 are disulfide-linked.

In terms of assembly, heterohexamer of one A chain and of five B chains.

In terms of biological role, the biological activity of the toxin is produced by the A chain, which activates intracellular adenyl cyclase. This chain is Heat-labile enterotoxin B chain (eltB), found in Escherichia coli O78:H11 (strain H10407 / ETEC).